Consider the following 807-residue polypeptide: Glycerol-3-phosphate acyltransferase (807 aa).

An HXXXXD motif motif is present at residues 306-311 (HRSHMD).

It belongs to the GPAT/DAPAT family.

It is found in the cell inner membrane. The catalysed reaction is sn-glycerol 3-phosphate + an acyl-CoA = a 1-acyl-sn-glycero-3-phosphate + CoA. Its pathway is phospholipid metabolism; CDP-diacylglycerol biosynthesis; CDP-diacylglycerol from sn-glycerol 3-phosphate: step 1/3. The sequence is that of Glycerol-3-phosphate acyltransferase (plsB) from Escherichia coli O157:H7.